Consider the following 274-residue polypeptide: 3-methyl-2-oxobutanoate hydroxymethyltransferase (274 aa).

Residues aspartate 46 and aspartate 85 each contribute to the Mg(2+) site. Residues 46–47, aspartate 85, and lysine 115 each bind 3-methyl-2-oxobutanoate; that span reads DS. Glutamate 117 contributes to the Mg(2+) binding site. Glutamate 184 functions as the Proton acceptor in the catalytic mechanism.

Belongs to the PanB family. Homodecamer; pentamer of dimers. Mg(2+) is required as a cofactor.

The protein resides in the cytoplasm. It catalyses the reaction 3-methyl-2-oxobutanoate + (6R)-5,10-methylene-5,6,7,8-tetrahydrofolate + H2O = 2-dehydropantoate + (6S)-5,6,7,8-tetrahydrofolate. The protein operates within cofactor biosynthesis; coenzyme A biosynthesis. In terms of biological role, catalyzes the reversible reaction in which hydroxymethyl group from 5,10-methylenetetrahydrofolate is transferred onto alpha-ketoisovalerate to form ketopantoate. In Halobacterium salinarum (strain ATCC 29341 / DSM 671 / R1), this protein is 3-methyl-2-oxobutanoate hydroxymethyltransferase.